The chain runs to 265 residues: Tryptophan synthase alpha chain (265 aa).

Catalysis depends on proton acceptor residues E48 and D59.

This sequence belongs to the TrpA family. Tetramer of two alpha and two beta chains.

The enzyme catalyses (1S,2R)-1-C-(indol-3-yl)glycerol 3-phosphate + L-serine = D-glyceraldehyde 3-phosphate + L-tryptophan + H2O. It functions in the pathway amino-acid biosynthesis; L-tryptophan biosynthesis; L-tryptophan from chorismate: step 5/5. The alpha subunit is responsible for the aldol cleavage of indoleglycerol phosphate to indole and glyceraldehyde 3-phosphate. The protein is Tryptophan synthase alpha chain of Pelagibacter ubique (strain HTCC1062).